Consider the following 521-residue polypeptide: Lipid-translocating exporter-like protein RTA1 (521 aa).

7 consecutive transmembrane segments (helical) span residues 186-206 (GAPIFFTIAFAISTILHSWQC), 211-231 (AWKLIWLQPACAALFTLGYAL), 249-269 (LALFILSQICIYLGPPLLELA), 292-312 (VTAFFGGLMAIVEGLSGSGVS), 332-352 (LVALALQVCVIFIFVYLSVLF), 371-391 (TLMTLYLSMALIFIRCVFRLV), and 418-438 (EAYFYAFEASLMLINSFLWNV). A disordered region spans residues 493-521 (THSQPQELYENPNGNGHKKFRLGNGGRAT).

The protein belongs to the lipid-translocating exporter (LTE) (TC 9.A.26.1) family.

It is found in the membrane. Functionally, lipid-translocating exporter-like protein; part of the gene cluster that mediates the biosynthesis of phomenoic acid, a long chain aliphatic carboxylic acid that does not appear to be essential for pathogenicity but may play a role in allowing to outcompete other fungi in the environmental niche via its antifungal properties. The sequence is that of Lipid-translocating exporter-like protein RTA1 from Leptosphaeria maculans (strain JN3 / isolate v23.1.3 / race Av1-4-5-6-7-8) (Blackleg fungus).